The following is a 31-amino-acid chain: Cytochrome b6-f complex subunit 6 (31 aa).

A helical membrane pass occupies residues 4–24 (IISYFGFLFGALTLALILFIG).

Belongs to the PetL family. As to quaternary structure, the 4 large subunits of the cytochrome b6-f complex are cytochrome b6, subunit IV (17 kDa polypeptide, PetD), cytochrome f and the Rieske protein, while the 4 small subunits are PetG, PetL, PetM and PetN. The complex functions as a dimer.

The protein resides in the plastid. It localises to the chloroplast thylakoid membrane. Its function is as follows. Component of the cytochrome b6-f complex, which mediates electron transfer between photosystem II (PSII) and photosystem I (PSI), cyclic electron flow around PSI, and state transitions. PetL is important for photoautotrophic growth as well as for electron transfer efficiency and stability of the cytochrome b6-f complex. This chain is Cytochrome b6-f complex subunit 6, found in Physcomitrium patens (Spreading-leaved earth moss).